The primary structure comprises 209 residues: Small ribosomal subunit protein uS4 (209 aa).

An S4 RNA-binding domain is found at 98–164 (SRLDNVVYRG…TPFIVARETA (67 aa)).

This sequence belongs to the universal ribosomal protein uS4 family. As to quaternary structure, part of the 30S ribosomal subunit. Contacts protein S5. The interaction surface between S4 and S5 is involved in control of translational fidelity.

Functionally, one of the primary rRNA binding proteins, it binds directly to 16S rRNA where it nucleates assembly of the body of the 30S subunit. Its function is as follows. With S5 and S12 plays an important role in translational accuracy. In Frankia alni (strain DSM 45986 / CECT 9034 / ACN14a), this protein is Small ribosomal subunit protein uS4.